The following is a 395-amino-acid chain: Argininosuccinate synthase (395 aa).

Residues 10–18 (AYSGGLDTS) and Ala-37 contribute to the ATP site. The L-citrulline site is built by Tyr-88 and Ser-93. Gly-118 serves as a coordination point for ATP. Positions 120, 124, and 125 each coordinate L-aspartate. Residue Asn-124 coordinates L-citrulline. L-citrulline is bound by residues Arg-128, Ser-179, Ser-188, Glu-264, and Tyr-276.

This sequence belongs to the argininosuccinate synthase family. Type 1 subfamily. As to quaternary structure, homotetramer.

It is found in the cytoplasm. The enzyme catalyses L-citrulline + L-aspartate + ATP = 2-(N(omega)-L-arginino)succinate + AMP + diphosphate + H(+). The protein operates within amino-acid biosynthesis; L-arginine biosynthesis; L-arginine from L-ornithine and carbamoyl phosphate: step 2/3. The sequence is that of Argininosuccinate synthase from Pelagibacter ubique (strain HTCC1062).